Here is a 586-residue protein sequence, read N- to C-terminus: Lamin-B1 (586 aa).

Residues 1 to 31 (MATATPVPPRMGSRAGGPTTPLSPTRLSRLQ) form a disordered region. A2 is subject to N-acetylalanine. The head stretch occupies residues 2–34 (ATATPVPPRMGSRAGGPTTPLSPTRLSRLQEKE). Residues T3 and T5 each carry the phosphothreonine modification. The residue at position 14 (R14) is an Omega-N-methylarginine. The residue at position 20 (T20) is a Phosphothreonine. S23 carries the phosphoserine modification. A Phosphothreonine modification is found at T25. S28 bears the Phosphoserine mark. The 357-residue stretch at 32–388 (EKEELRELND…KLLEGEEERL (357 aa)) folds into the IF rod domain. The coil 1A stretch occupies residues 35 to 69 (ELRELNDRLAVYIDKVRSLETENSALQLQVTEREE). The interval 70 to 81 (VRGRELTGLKAL) is linker 1. The tract at residues 82-215 (YETELADARR…EFRKSMYEEE (134 aa)) is coil 1B. Residue K102 forms a Glycyl lysine isopeptide (Lys-Gly) (interchain with G-Cter in SUMO2) linkage. K111 is modified (N6-acetyllysine). A Glycyl lysine isopeptide (Lys-Gly) (interchain with G-Cter in SUMO2) cross-link involves residue K123. Phosphoserine is present on S126. K145 is covalently cross-linked (Glycyl lysine isopeptide (Lys-Gly) (interchain with G-Cter in SUMO2)). Position 157 is an N6-acetyllysine; alternate (K157). K157 is covalently cross-linked (Glycyl lysine isopeptide (Lys-Gly) (interchain with G-Cter in SUMO2); alternate). S158 bears the Phosphoserine mark. K181 is covalently cross-linked (Glycyl lysine isopeptide (Lys-Gly) (interchain with G-Cter in SUMO2)). Residues S200, S210, and S232 each carry the phosphoserine modification. Residues 216–243 (INETRRKHETRLVEVDSGRQIEYEYKLA) form a linker 2 region. Glycyl lysine isopeptide (Lys-Gly) (interchain with G-Cter in SUMO2) cross-links involve residues K241 and K261. Positions 244–386 (QALHEMREQH…YRKLLEGEEE (143 aa)) are coil 2. K271 carries the post-translational modification N6-acetyllysine; alternate. Residue K271 forms a Glycyl lysine isopeptide (Lys-Gly) (interchain with G-Cter in SUMO2); alternate linkage. Phosphoserine occurs at positions 278 and 302. K312 participates in a covalent cross-link: Glycyl lysine isopeptide (Lys-Gly) (interchain with G-Cter in SUMO2). K330 bears the N6-acetyllysine; alternate mark. K330 is covalently cross-linked (Glycyl lysine isopeptide (Lys-Gly) (interchain with G-Cter in SUMO2); alternate). S375 and S393 each carry phosphoserine. Residues 387 to 586 (RLKLSPSPSS…RASNRSCAIM (200 aa)) are tail. The tract at residues 388 to 432 (LKLSPSPSSRVTVSRASSSRSVRTTRGKRKRVDVEESEASSSVSI) is disordered. Over residues 390 to 409 (LSPSPSSRVTVSRASSSRSV) the composition is skewed to low complexity. O-linked (GlcNAc) threonine glycosylation occurs at T399. R413 is subject to Omega-N-methylarginine. Residues 415–420 (KRKRVD) carry the Nuclear localization signal motif. In terms of domain architecture, LTD spans 430 to 546 (VSISHSASAT…EEVAQRSTVF (117 aa)). At K483 the chain carries N6-acetyllysine. K532 is covalently cross-linked (Glycyl lysine isopeptide (Lys-Gly) (interchain with G-Cter in SUMO2)). A Phosphoserine modification is found at S534. A Glycyl lysine isopeptide (Lys-Gly) (interchain with G-Cter in SUMO2) cross-link involves residue K547. Phosphothreonine is present on T575. The residue at position 583 (C583) is a Cysteine methyl ester. The S-farnesyl cysteine moiety is linked to residue C583. A propeptide spans 584–586 (AIM) (removed in mature form).

It belongs to the intermediate filament family. Homodimer. Lamin dimers then assemble into dimeric head-to-tail polymers. Ultimately, two head-to-tail polymers assemble laterally into a protofilament with a uniformly shaped rod of 3.5 nm in diameter. Interacts with SPAG4 and SEPT12. In terms of processing, B-type lamins undergo a series of modifications, such as farnesylation and phosphorylation. Increased phosphorylation of the lamins occurs before envelope disintegration and probably plays a role in regulating lamin associations. Post-translationally, phosphorylation plays a key role in lamin organization, subcellular localization and nuclear envelope disintegration. Phosphorylation by CDK1 at Ser-23 and Ser-393 at the onset of mitosis drives lamin disassembly and nuclear envelope breakdown.

Its subcellular location is the nucleus lamina. Its function is as follows. Lamins are intermediate filament proteins that assemble into a filamentous meshwork, and which constitute the major components of the nuclear lamina, a fibrous layer on the nucleoplasmic side of the inner nuclear membrane. Lamins provide a framework for the nuclear envelope, bridging the nuclear envelope and chromatin, thereby playing an important role in nuclear assembly, chromatin organization, nuclear membrane and telomere dynamics. The structural integrity of the lamina is strictly controlled by the cell cycle, as seen by the disintegration and formation of the nuclear envelope in prophase and telophase, respectively. This is Lamin-B1 (LMNB1) from Homo sapiens (Human).